We begin with the raw amino-acid sequence, 418 residues long: Ceramide synthase LAC1 (418 aa).

Over residues 1–14 (MSTIKPSPSNNNLK) the composition is skewed to polar residues. The segment at 1 to 25 (MSTIKPSPSNNNLKVRSRPRRKSSI) is disordered. The residue at position 2 (serine 2) is an N-acetylserine. The Cytoplasmic segment spans residues 2-81 (STIKPSPSNN…WFSFREISYR (80 aa)). Positions 15–24 (VRSRPRRKSS) are enriched in basic residues. Residues serine 23 and serine 24 each carry the phosphoserine modification. The helical transmembrane segment at 82-102 (HAWIAPLMILIAVYSAYFTSG) threads the bilayer. An N-linked (GlcNAc...) asparagine glycan is attached at asparagine 103. The Lumenal portion of the chain corresponds to 103–130 (NTTKTNVLHRFVAVSYQIGDTNAYGKGI). A helical transmembrane segment spans residues 131–155 (NDLCFVFYYMIFFTFLREFLMDVVI). Residues 156 to 172 (RPFAIRLHVTSKHRIKR) lie on the Cytoplasmic side of the membrane. A TLC domain is found at 168-385 (HRIKRIMEQM…FRVLYRILWR (218 aa)). 3 residues coordinate fumonisin B1: arginine 169, arginine 172, and tyrosine 182. The chain crosses the membrane as a helical span at residues 173–194 (IMEQMYAIFYTGVSGPFGIYCM). Topologically, residues 195–217 (YHSDLWFFNTKAMYRTYPDFTNP) are lumenal. The chain crosses the membrane as a helical span at residues 218–240 (FLFKVFYLGQAAFWAQQACILVL). Hexacosanoate contacts are provided by tyrosine 224 and tryptophan 231. Tryptophan 231 provides a ligand contact to fumonisin B1. Residue tryptophan 231 participates in hexacosanoyl-CoA binding. Topologically, residues 241 to 249 (QLEKPRKDH) are cytoplasmic. A helical membrane pass occupies residues 250-268 (NELTFHHIVTLLLIWSSYV). Histidine 255 is a binding site for fumonisin B1. The hexacosanoate site is built by histidine 255, threonine 259, leucine 262, isoleucine 263, serine 265, serine 266, phenylalanine 269, phenylalanine 271, methionine 274, glycine 275, isoleucine 278, tyrosine 279, methionine 282, aspartate 283, and aspartate 286. Residues histidine 255, threonine 259, and leucine 262 each contribute to the hexacosanoyl-CoA site. Hexacosanoyl-CoA contacts are provided by serine 265 and serine 266. Residues 269–273 (FHFTK) lie on the Lumenal side of the membrane. Hexacosanoyl-CoA contacts are provided by phenylalanine 271, methionine 274, glycine 275, isoleucine 278, tyrosine 279, and methionine 282. The helical transmembrane segment at 274–295 (MGLPIYITMDVSDFLLSFSKTL) threads the bilayer. Residues aspartate 286, leucine 289, lysine 293, asparagine 296, tyrosine 297, alanine 303, phenylalanine 304, phenylalanine 307, and tryptophan 314 each contribute to the fumonisin B1 site. Positions 286, 289, 293, and 296 each coordinate hexacosanoyl-CoA. At 296-305 (NYLDSGLAFF) the chain is on the cytoplasmic side. The chain crosses the membrane as a helical span at residues 306 to 334 (SFAIFVVAWIYLRHYINLKILWSVLTQFR). Position 307 (phenylalanine 307) interacts with hexacosanoyl-CoA. Hexacosanoate is bound by residues arginine 318, phenylalanine 343, tyrosine 348, isoleucine 352, serine 353, isoleucine 356, valine 357, leucine 360, isoleucine 361, and tryptophan 371. Position 318 (arginine 318) interacts with hexacosanoyl-CoA. Over 335-353 (TEGNYVLNFATQQYKCWIS) the chain is Lumenal. Residues tyrosine 348, isoleucine 352, serine 353, isoleucine 356, valine 357, and leucine 360 each coordinate hexacosanoyl-CoA. Residues 354-382 (LPIVFVLIGALQLVNLYWLFLIFRVLYRI) form a helical membrane-spanning segment. Positions 371, 375, 378, 382, and 385 each coordinate fumonisin B1. Hexacosanoyl-CoA is bound at residue tryptophan 371. Residues 383-418 (LWRGILKDDRSDSESDEESDESSTTPTDSTPTKKDI) are Cytoplasmic-facing. Residues 390–418 (DDRSDSESDEESDESSTTPTDSTPTKKDI) form a disordered region.

The protein belongs to the sphingosine N-acyltransferase family. As to quaternary structure, component of the ceramide synthase complex composed of at least LAC1, LAG1 and LIP1. Forms a heterotetrameric complex, where one unit of the LIP1 homodimer interacts with LAC1 and the other with either LAC1 or LAG1. In terms of processing, phosphorylated; phosphorylation is induced upon disruption of sphingolipid synthesis. Phosphorylation is inhibited by exogenous addition of phytosphingosine.

It is found in the endoplasmic reticulum membrane. The enzyme catalyses a very long-chain fatty acyl-CoA + a sphingoid base = an N-(very-long-chain fatty acyl)-sphingoid base + CoA + H(+). The catalysed reaction is hexacosanoyl-CoA + sphinganine = N-hexacosanoylsphinganine + CoA + H(+). It carries out the reaction eicosanoyl-CoA + sphinganine = N-eicosanoylsphinganine + CoA + H(+). It catalyses the reaction a fatty acyl-CoA + sphinganine = an N-acylsphinganine + CoA + H(+). The enzyme catalyses (4R)-hydroxysphinganine + a fatty acyl-CoA = an N-acyl-(4R)-4-hydroxysphinganine + CoA + H(+). It participates in lipid metabolism; sphingolipid metabolism. Its activity is regulated as follows. As part of the ceramide synthase complex, inhibited by the sphinganine analog mycotoxin, fumonisin B1 (FB1). Activated by ACB1, as part of the ceramide synthase complex. Functionally, component of the ceramide synthase complex that catalyzes the transfer of the acyl chain from acyl-CoA to a sphingoid base, with high selectivity toward hexacosanoyl-CoA (C26:0-CoA). N-acylates sphinganine and phytosphingosine bases to form dihydroceramides and phytoceramides, respectively. Redundant with LAG1. Facilitates ER-to-Golgi transport of GPI-anchored proteins. Has a lower affinity for phytosphingosine (PHS) than dihydrosphingosine (DHS); PHS is required for the synthesis of phytoceramides and the formation of nuclear envelopes. Along with LAG1, plays a role in pheromone-induced MAP kinase-activation of mating and formation of diploid cells. May also play a role, together with LAG1, in the polarized membrane distribution of phosphatidylinositol 4,5 biphosphate required for STE5 localization to the plasma membrane. This is Ceramide synthase LAC1 (LAC1) from Saccharomyces cerevisiae (strain ATCC 204508 / S288c) (Baker's yeast).